The sequence spans 448 residues: Glucose-6-phosphate isomerase (448 aa).

Residue Glu-291 is the Proton donor of the active site. Catalysis depends on residues His-312 and Lys-425.

The protein belongs to the GPI family.

The protein localises to the cytoplasm. It catalyses the reaction alpha-D-glucose 6-phosphate = beta-D-fructose 6-phosphate. The protein operates within carbohydrate biosynthesis; gluconeogenesis. Its pathway is carbohydrate degradation; glycolysis; D-glyceraldehyde 3-phosphate and glycerone phosphate from D-glucose: step 2/4. In terms of biological role, catalyzes the reversible isomerization of glucose-6-phosphate to fructose-6-phosphate. In Symbiobacterium thermophilum (strain DSM 24528 / JCM 14929 / IAM 14863 / T), this protein is Glucose-6-phosphate isomerase.